Here is a 122-residue protein sequence, read N- to C-terminus: Large ribosomal subunit protein uL14 (122 aa).

The protein belongs to the universal ribosomal protein uL14 family. As to quaternary structure, part of the 50S ribosomal subunit. Forms a cluster with proteins L3 and L19. In the 70S ribosome, L14 and L19 interact and together make contacts with the 16S rRNA in bridges B5 and B8.

In terms of biological role, binds to 23S rRNA. Forms part of two intersubunit bridges in the 70S ribosome. The protein is Large ribosomal subunit protein uL14 of Marinobacter nauticus (strain ATCC 700491 / DSM 11845 / VT8) (Marinobacter aquaeolei).